Reading from the N-terminus, the 278-residue chain is Shikimate dehydrogenase (NADP(+)) (278 aa).

Residues 15 to 17 and T62 each bind shikimate; that span reads SMS. K66 serves as the catalytic Proton acceptor. Residue E78 participates in NADP(+) binding. Shikimate contacts are provided by N87 and D102. NADP(+) contacts are provided by residues 127-131, 151-156, and I217; these read GAGGA and NRTPEK. Position 219 (Y219) interacts with shikimate. Position 240 (G240) interacts with NADP(+).

It belongs to the shikimate dehydrogenase family. In terms of assembly, homodimer.

The catalysed reaction is shikimate + NADP(+) = 3-dehydroshikimate + NADPH + H(+). It functions in the pathway metabolic intermediate biosynthesis; chorismate biosynthesis; chorismate from D-erythrose 4-phosphate and phosphoenolpyruvate: step 4/7. Functionally, involved in the biosynthesis of the chorismate, which leads to the biosynthesis of aromatic amino acids. Catalyzes the reversible NADPH linked reduction of 3-dehydroshikimate (DHSA) to yield shikimate (SA). The chain is Shikimate dehydrogenase (NADP(+)) from Bacillus licheniformis (strain ATCC 14580 / DSM 13 / JCM 2505 / CCUG 7422 / NBRC 12200 / NCIMB 9375 / NCTC 10341 / NRRL NRS-1264 / Gibson 46).